We begin with the raw amino-acid sequence, 477 residues long: Argininosuccinate lyase (477 aa).

This sequence belongs to the lyase 1 family. Argininosuccinate lyase subfamily.

The protein localises to the cytoplasm. It carries out the reaction 2-(N(omega)-L-arginino)succinate = fumarate + L-arginine. Its pathway is amino-acid biosynthesis; L-arginine biosynthesis; L-arginine from L-ornithine and carbamoyl phosphate: step 3/3. The chain is Argininosuccinate lyase from Acinetobacter baumannii (strain ACICU).